We begin with the raw amino-acid sequence, 1013 residues long: AP-2 complex subunit alpha-2 (1013 aa).

HEAT repeat units lie at residues 254–289, 354–391, 393–430, and 521–565; these read AMRA…VVKN, DIIK…VSNA, DIVE…DLSW, and TVST…CIDV. A disordered region spans residues 652–676; it reads STDPESVARSLSHPNGTLSNIDPQT. The span at 663–675 shows a compositional bias: polar residues; sequence SHPNGTLSNIDPQ. The 100-residue stretch at 742 to 841 folds into the GAE domain; sequence ALCLKDSGVL…LDFSYKFGTN (100 aa). The tract at residues 760–1013 is required for AP180 binding; the sequence is GIKAEWRGHH…DPGAMLAGLL (254 aa).

Belongs to the adaptor complexes large subunit family. As to quaternary structure, adaptor protein complex 2 (AP-2) is a heterotetramer composed of two large adaptins (alpha-type and beta-type subunits), a medium adaptin (mu-type subunit) and a small adaptin (sigma-type subunit). Interacts with AP180.

It is found in the membrane. Its subcellular location is the coated pit. Its function is as follows. Subunit of the adaptor protein complex 2 (AP-2). Adaptor protein complexes function in protein transport via transport vesicles in different membrane traffic pathways. Adaptor protein complexes are vesicle coat components and appear to be involved in cargo selection and vesicle formation. AP-2 is involved in clathrin-dependent endocytosis in which cargo proteins are incorporated into vesicles surrounded by clathrin (clathrin-coated vesicles, CCVs) which are destined for fusion with the early endosome. The complex binds polyphosphoinositides. This is AP-2 complex subunit alpha-2 (ALPHAC-AD) from Arabidopsis thaliana (Mouse-ear cress).